Here is a 206-residue protein sequence, read N- to C-terminus: Thiamine-phosphate synthase (206 aa).

4-amino-2-methyl-5-(diphosphooxymethyl)pyrimidine is bound by residues 36–40 (QLRAK) and Asn68. The Mg(2+) site is built by Asp69 and Asp88. Ser105 lines the 4-amino-2-methyl-5-(diphosphooxymethyl)pyrimidine pocket. 131–133 (TPT) provides a ligand contact to 2-[(2R,5Z)-2-carboxy-4-methylthiazol-5(2H)-ylidene]ethyl phosphate. Lys134 lines the 4-amino-2-methyl-5-(diphosphooxymethyl)pyrimidine pocket. Gly162 lines the 2-[(2R,5Z)-2-carboxy-4-methylthiazol-5(2H)-ylidene]ethyl phosphate pocket.

It belongs to the thiamine-phosphate synthase family. Requires Mg(2+) as cofactor.

The catalysed reaction is 2-[(2R,5Z)-2-carboxy-4-methylthiazol-5(2H)-ylidene]ethyl phosphate + 4-amino-2-methyl-5-(diphosphooxymethyl)pyrimidine + 2 H(+) = thiamine phosphate + CO2 + diphosphate. It carries out the reaction 2-(2-carboxy-4-methylthiazol-5-yl)ethyl phosphate + 4-amino-2-methyl-5-(diphosphooxymethyl)pyrimidine + 2 H(+) = thiamine phosphate + CO2 + diphosphate. The enzyme catalyses 4-methyl-5-(2-phosphooxyethyl)-thiazole + 4-amino-2-methyl-5-(diphosphooxymethyl)pyrimidine + H(+) = thiamine phosphate + diphosphate. It participates in cofactor biosynthesis; thiamine diphosphate biosynthesis; thiamine phosphate from 4-amino-2-methyl-5-diphosphomethylpyrimidine and 4-methyl-5-(2-phosphoethyl)-thiazole: step 1/1. In terms of biological role, condenses 4-methyl-5-(beta-hydroxyethyl)thiazole monophosphate (THZ-P) and 2-methyl-4-amino-5-hydroxymethyl pyrimidine pyrophosphate (HMP-PP) to form thiamine monophosphate (TMP). This chain is Thiamine-phosphate synthase, found in Thermus thermophilus (strain ATCC BAA-163 / DSM 7039 / HB27).